Consider the following 341-residue polypeptide: Phosphoribosylformylglycinamidine cyclo-ligase (341 aa).

It belongs to the AIR synthase family.

The protein localises to the cytoplasm. The enzyme catalyses 2-formamido-N(1)-(5-O-phospho-beta-D-ribosyl)acetamidine + ATP = 5-amino-1-(5-phospho-beta-D-ribosyl)imidazole + ADP + phosphate + H(+). It participates in purine metabolism; IMP biosynthesis via de novo pathway; 5-amino-1-(5-phospho-D-ribosyl)imidazole from N(2)-formyl-N(1)-(5-phospho-D-ribosyl)glycinamide: step 2/2. The polypeptide is Phosphoribosylformylglycinamidine cyclo-ligase (Synechococcus elongatus (strain ATCC 33912 / PCC 7942 / FACHB-805) (Anacystis nidulans R2)).